A 1317-amino-acid chain; its full sequence is Immunoglobulin superfamily member 1 (1317 aa).

The N-terminal stretch at 1 to 20 (MMLRTFTLLLLCIWLNPGMT) is a signal peptide. 5 Ig-like C2-type domains span residues 21–112 (SLAV…KILE), 114–211 (EAPG…KLVV), 216–302 (PKPT…SDIL), 311–398 (PKTW…ATYN), and 400–481 (VELM…HRSK). At 21-499 (SLAVESQPEL…GFLTWNSILN (479 aa)) the chain is on the extracellular side. An N-linked (GlcNAc...) asparagine glycan is attached at N43. A disulfide bridge connects residues C48 and C96. A disulfide bridge connects residues C238 and C286. N-linked (GlcNAc...) asparagine glycosylation is found at N328 and N371. 2 cysteine pairs are disulfide-bonded: C333-C382 and C422-C465. The helical transmembrane segment at 500 to 520 (EAVRVSLTMQLASLLLLVVWI) threads the bilayer. Residues 521 to 531 (RWKCRRLRLRE) lie on the Cytoplasmic side of the membrane. The helical transmembrane segment at 532-552 (AWLLGTAQGVAMLFILMALLC) threads the bilayer. Residues 553–1317 (CGLCNGALTE…EVSVELTVPI (765 aa)) are Extracellular-facing. Ig-like C2-type domains lie at 570-658 (TPKP…ALEL), 659-753 (VGTD…ELVI), 758-850 (PKPF…LVVT), 854-938 (PKPT…SSLS), 946-1041 (TDTF…ELIV), 1046-1131 (PKPS…NHSN), and 1142-1223 (PKPS…EPSD). The cysteines at positions 780 and 830 are disulfide-linked. N-linked (GlcNAc...) asparagine glycosylation is present at N871. C876 and C923 are oxidised to a cystine. N967 and N1063 each carry an N-linked (GlcNAc...) asparagine glycan. Cystine bridges form between C1068/C1115 and C1164/C1207. A disordered region spans residues 1290 to 1310 (NQEGEPGTTTNSPSSASQEVS). Positions 1296-1309 (GTTTNSPSSASQEV) are enriched in polar residues.

Interacts with INHA; the interaction is not confirmed by standard receptor binding assays. Interacts with ACVR1B; the interaction appears to be ligand-dependent as it is diminished by inhibin B and activin A. Interacts with ACVR2A, ACVR2B, ACVRL1 and BMPR1B. Interacts with HECTD1.

It is found in the membrane. The protein resides in the secreted. Functionally, seems to be a coreceptor in inhibin signaling, but seems not to be a high-affinity inhibin receptor. Antagonizes activin A signaling in the presence or absence of inhibin B. Necessary to mediate a specific antagonistic effect of inhibin B on activin-stimulated transcription. This chain is Immunoglobulin superfamily member 1 (Igsf1), found in Mus musculus (Mouse).